Consider the following 557-residue polypeptide: MATEKNTLLSLILTAGITALVATGQKAEQPEVVTNYGSVRGYQVKVNAAERSVNVFLGLPFAKPPVGPLRFSEPQPPEPWKGVRDAASYPPMCLQDKVLGQYLSDAITNRKEKVRLQISEDCLYLNVYTPVSTEEQEKLPVFVWIHGGGLVSGAASSYDGSALAAFDNVVVVTIQYRLGIAGYFSTGDKHARGNWGYLDQVAALQWIQENIIHFRGDPGSVTIFGESAGGVSVSALVLSPLAKGLFHKAISESGTAVRILFTEQPEEQAQRIAAAAGCEKSSSAALVECLREKTEAEMEQITLKMPPMFISASLDGVFFPKSPRQLLSEKVINAVPYIIGVNNCEFGWILPRMMKFPEFTEGLEKDVARQVLQSTLALSFKGAPSDIVDLVYNEYIGVAENRAQVRDGLLDSIADPLFVFSAVEVARHHRDAGNPVYFYEFQHRPSSAAGVVPEFVKADHADEIAFVFGKPFLAGNATEEEAKLSRTVMKYWTNFARNGNPNGEGLVHWPQYDMDERYLEIDLTQKAAKKLKERKMEFWMQLTEQIMSDRRRKHTDL.

The signal sequence occupies residues 1–25 (MATEKNTLLSLILTAGITALVATGQ). Cysteine 93 and cysteine 122 are oxidised to a cystine. Residue serine 227 is the Acyl-ester intermediate of the active site. Catalysis depends on charge relay system residues glutamate 345 and histidine 460. The N-linked (GlcNAc...) asparagine glycan is linked to asparagine 476.

This sequence belongs to the type-B carboxylesterase/lipase family. In terms of tissue distribution, highest levels in uropygial gland, much lower in liver and kidney.

Fatty acid biosynthesis chain termination and release of the free fatty acid product is achieved by hydrolysis of the thio ester by a thioesterase. This thioesterase may be associated with peroxisome proliferation and may play a role in the production of 3-hydroxy fatty acid diester pheromones. The protein is Fatty acyl-CoA hydrolase precursor, medium chain of Anas platyrhynchos (Mallard).